The chain runs to 374 residues: GDSL esterase/lipase At3g50400 (374 aa).

An N-terminal signal peptide occupies residues Met-1–Ala-26. Ser-41 serves as the catalytic Nucleophile. N-linked (GlcNAc...) asparagine glycans are attached at residues Asn-104 and Asn-125. Residues Asp-339 and His-342 contribute to the active site.

Belongs to the 'GDSL' lipolytic enzyme family.

It is found in the secreted. In Arabidopsis thaliana (Mouse-ear cress), this protein is GDSL esterase/lipase At3g50400.